A 212-amino-acid chain; its full sequence is Hydroxyacylglutathione hydrolase GloC (212 aa).

Zn(2+) is bound by residues His55, His57, Asp59, His60, His132, Asp151, and His192.

The protein belongs to the metallo-beta-lactamase superfamily. Glyoxalase II family. Zn(2+) serves as cofactor.

It carries out the reaction an S-(2-hydroxyacyl)glutathione + H2O = a 2-hydroxy carboxylate + glutathione + H(+). The enzyme catalyses (R)-S-lactoylglutathione + H2O = (R)-lactate + glutathione + H(+). It participates in secondary metabolite metabolism; methylglyoxal degradation; (R)-lactate from methylglyoxal: step 2/2. In terms of biological role, type II glyoxalase, isozyme of GloB, that hydrolyzes (R)-S-lactoylglutathione to (R)-lactate and glutathione. Plays a role in methylglyoxal (MG) detoxification. The polypeptide is Hydroxyacylglutathione hydrolase GloC (Haemophilus influenzae (strain ATCC 51907 / DSM 11121 / KW20 / Rd)).